A 520-amino-acid chain; its full sequence is Putative cytochrome P450 CYP13A4 (520 aa).

A heme-binding site is contributed by Cys464.

The protein belongs to the cytochrome P450 family. It depends on heme as a cofactor.

Functionally, cytochromes P450 are a group of heme-thiolate monooxygenases. They oxidize a variety of structurally unrelated compounds, including steroids, fatty acids, and xenobiotics. The sequence is that of Putative cytochrome P450 CYP13A4 (cyp-13A4) from Caenorhabditis elegans.